A 134-amino-acid polypeptide reads, in one-letter code: Small ribosomal subunit protein uS8 (134 aa).

Belongs to the universal ribosomal protein uS8 family. Part of the 30S ribosomal subunit. Contacts proteins S5 and S12.

Functionally, one of the primary rRNA binding proteins, it binds directly to 16S rRNA central domain where it helps coordinate assembly of the platform of the 30S subunit. The protein is Small ribosomal subunit protein uS8 of Fervidobacterium nodosum (strain ATCC 35602 / DSM 5306 / Rt17-B1).